The chain runs to 326 residues: Siroheme decarboxylase NirDL subunit (326 aa).

The protein belongs to the Ahb/Nir family. As to quaternary structure, forms a complex composed of NirDL, NirG and NirH. All proteins are required for the total conversion of siroheme to didecarboxysiroheme.

The catalysed reaction is siroheme + 2 H(+) = 12,18-didecarboxysiroheme + 2 CO2. It participates in porphyrin-containing compound metabolism. Functionally, involved in heme d1 biosynthesis. Catalyzes the decarboxylation of siroheme into didecarboxysiroheme. Siroheme is probably decarboxylated to monodecarboxysiroheme, which is in turn decarboxylated to didecarboxysiroheme. This Paracoccus pantotrophus (Thiosphaera pantotropha) protein is Siroheme decarboxylase NirDL subunit.